Here is a 240-residue protein sequence, read N- to C-terminus: Nudix hydrolase 3 (240 aa).

The region spanning 50–190 (NSAMSVLIPL…RMKYTLPSFD (141 aa)) is the Nudix hydrolase domain. Positions 89–110 (GRMDPGETTTETALRETFEEIG) match the Nudix box motif. Positions 104 and 108 each coordinate Mg(2+).

Belongs to the Nudix hydrolase family. PCD1 subfamily. The cofactor is Mn(2+). Requires Mg(2+) as cofactor.

Probably mediates the hydrolysis of some nucleoside diphosphate derivatives. The chain is Nudix hydrolase 3 (ndx-3) from Caenorhabditis elegans.